Here is a 355-residue protein sequence, read N- to C-terminus: Probable tRNA-dihydrouridine synthase 1 (355 aa).

FMN is bound by residues 48-50 and Q102; that span reads PLS. C132 functions as the Proton donor in the catalytic mechanism. FMN contacts are provided by residues K171, 232 to 234, and 256 to 257; these read NGD and SR.

This sequence belongs to the Dus family. The cofactor is FMN.

The catalysed reaction is a 5,6-dihydrouridine in tRNA + NAD(+) = a uridine in tRNA + NADH + H(+). It catalyses the reaction a 5,6-dihydrouridine in tRNA + NADP(+) = a uridine in tRNA + NADPH + H(+). Its function is as follows. Catalyzes the synthesis of 5,6-dihydrouridine (D), a modified base found in the D-loop of most tRNAs, via the reduction of the C5-C6 double bond in target uridines. The protein is Probable tRNA-dihydrouridine synthase 1 (dus1) of Synechocystis sp. (strain ATCC 27184 / PCC 6803 / Kazusa).